The following is a 216-amino-acid chain: Adenylate kinase (216 aa).

10 to 15 (GAGKGT) is a binding site for ATP. Residues 30–59 (STGDMFRAAMKAETEMGLQAKSFIDKGALV) are NMP. AMP-binding positions include T31, R36, 57-59 (ALV), 85-88 (GFPR), and Q92. An LID region spans residues 126 to 163 (GRRICKECGATYHLEFNPPAKADVCDKCGGELYQRSDD). R127 lines the ATP pocket. C130 and C133 together coordinate Zn(2+). Residue 136 to 137 (TY) coordinates ATP. Residues C150 and C153 each contribute to the Zn(2+) site. AMP is bound by residues R160 and R171. Position 199 (Q199) interacts with ATP.

This sequence belongs to the adenylate kinase family. As to quaternary structure, monomer.

It is found in the cytoplasm. It carries out the reaction AMP + ATP = 2 ADP. It participates in purine metabolism; AMP biosynthesis via salvage pathway; AMP from ADP: step 1/1. Functionally, catalyzes the reversible transfer of the terminal phosphate group between ATP and AMP. Plays an important role in cellular energy homeostasis and in adenine nucleotide metabolism. This is Adenylate kinase from Bacillus cereus (strain G9842).